The primary structure comprises 268 residues: Nickel import ATP-binding protein NikE (268 aa).

The ABC transporter domain occupies 4-252; sequence LNVSGLSHHY…SSDAGRVLQN (249 aa). Position 45–52 (45–52) interacts with ATP; that stretch reads GRSGCGKS.

Belongs to the ABC transporter superfamily. Nickel importer (TC 3.A.1.5.3) family. In terms of assembly, the complex is composed of two ATP-binding proteins (NikD and NikE), two transmembrane proteins (NikB and NikC) and a solute-binding protein (NikA).

It localises to the cell inner membrane. It carries out the reaction Ni(2+)(out) + ATP + H2O = Ni(2+)(in) + ADP + phosphate + H(+). Its function is as follows. Part of the ABC transporter complex NikABCDE involved in nickel import. Responsible for energy coupling to the transport system. In Shigella boydii serotype 4 (strain Sb227), this protein is Nickel import ATP-binding protein NikE.